The chain runs to 599 residues: E3 ubiquitin-protein ligase Kcmf1 (599 aa).

A ZZ-type zinc finger spans residues 4–60 (HEGVSCDSCLKSNFNGRRYKCLICYDYDLCADCYEDGVTSTRHLVEHPMQCILTRSD). Zn(2+) is bound by residues cysteine 9, cysteine 12, cysteine 24, cysteine 27, cysteine 33, cysteine 36, histidine 46, and histidine 50. The C2H2-type zinc finger occupies 78–101 (FTCPYCKKMGFSDATLLEHVSAEH). 5 disordered regions span residues 155 to 193 (HGGGVRRIPGRTLGGPRTRRSNMHFSSSSGLSALSPSGR), 229 to 253 (DRQQVTASRQIDRLPRRAHPIVSTS), 269 to 294 (GSGGSGAVGSGSGGGSGATAPPNLRT), 466 to 486 (VEQQQQQQQLQPAMVRQVNQM), and 507 to 599 (NTTQ…PDTR). Composition is skewed to low complexity over residues 160-170 (RRIPGRTLGGP) and 180-192 (SSSSGLSALSPSG). A compositionally biased stretch (gly residues) spans 269–285 (GSGGSGAVGSGSGGGSG). A compositionally biased stretch (gly residues) spans 513–532 (GTGGLGGAGATAAPGGGASG). A compositionally biased stretch (basic and acidic residues) spans 538 to 547 (TADRGIERRS). Residues 559–593 (SQQPQQQQQSTANPAASQQKYKQNASAATAAGNTN) show a composition bias toward low complexity.

The protein belongs to the KCMF1 family. In terms of assembly, interacts with poe.

It carries out the reaction S-ubiquitinyl-[E2 ubiquitin-conjugating enzyme]-L-cysteine + [acceptor protein]-L-lysine = [E2 ubiquitin-conjugating enzyme]-L-cysteine + N(6)-ubiquitinyl-[acceptor protein]-L-lysine.. Has intrinsic E3 ubiquitin ligase activity and promotes ubiquitination. Involved in the negative regulation of the Ras/MAPK signaling pathway in the wing by acting with the E2 enzyme Unc6 and the putative E3 ligases poe and Ufd4 to mediate the ubiquitination and proteasomal degradation of rl/MAPK. The sequence is that of E3 ubiquitin-protein ligase Kcmf1 from Drosophila melanogaster (Fruit fly).